A 449-amino-acid polypeptide reads, in one-letter code: Putative F-box/LRR-repeat protein At3g44090 (449 aa).

The 55-residue stretch at 23–77 (LASMDCLPDDLLVQILYFLPTKEAISTSLLSKRWRTLYSLVHNLDLDDYIFWHHE) folds into the F-box domain. LRR repeat units lie at residues 133 to 163 (YYNL…SLGT), 186 to 212 (YIWF…TIHH), 214 to 231 (FRPF…SVTI), 247 to 278 (TPNV…ELDL), 286 to 311 (RQVQ…HLTY), and 320 to 345 (SKKR…VLSG).

In Arabidopsis thaliana (Mouse-ear cress), this protein is Putative F-box/LRR-repeat protein At3g44090.